We begin with the raw amino-acid sequence, 103 residues long: Large ribosomal subunit protein uL23 (103 aa).

It belongs to the universal ribosomal protein uL23 family. In terms of assembly, part of the 50S ribosomal subunit. Contacts protein L29, and trigger factor when it is bound to the ribosome.

One of the early assembly proteins it binds 23S rRNA. One of the proteins that surrounds the polypeptide exit tunnel on the outside of the ribosome. Forms the main docking site for trigger factor binding to the ribosome. The sequence is that of Large ribosomal subunit protein uL23 from Zymomonas mobilis subsp. mobilis (strain ATCC 31821 / ZM4 / CP4).